The sequence spans 537 residues: Exodeoxyribonuclease 7 large subunit (537 aa).

The tract at residues 508–537 is disordered; it reads GEGAPVEPPQAARPSKGARTKAAQPSLFDD.

It belongs to the XseA family. As to quaternary structure, heterooligomer composed of large and small subunits.

It localises to the cytoplasm. The enzyme catalyses Exonucleolytic cleavage in either 5'- to 3'- or 3'- to 5'-direction to yield nucleoside 5'-phosphates.. In terms of biological role, bidirectionally degrades single-stranded DNA into large acid-insoluble oligonucleotides, which are then degraded further into small acid-soluble oligonucleotides. The protein is Exodeoxyribonuclease 7 large subunit of Azorhizobium caulinodans (strain ATCC 43989 / DSM 5975 / JCM 20966 / LMG 6465 / NBRC 14845 / NCIMB 13405 / ORS 571).